The primary structure comprises 177 residues: KxDL motif-containing protein 1 (177 aa).

M1 bears the N-acetylmethionine mark. Residues 100-177 are disordered; it reads SHIPEGSFLE…TDDEEETHEE (78 aa). A compositionally biased stretch (polar residues) spans 125–145; sequence ATSEQSTGSCDTSPDTVSPSL.

This sequence belongs to the KXD1 family. As to quaternary structure, component of the BLOC-one-related complex (BORC) which is composed of BLOC1S1, BLOC1S2, BORCS5, BORCS6, BORCS7, BORCS8, KXD1 and SNAPIN. Associates with the BLOC-1 complex. Interacts with BLOC1S1. Interacts with DTNBP1/BLOC1S7 (via coiled-coil domain). In terms of tissue distribution, widely expressed.

It is found in the lysosome membrane. Its function is as follows. As part of the BORC complex may play a role in lysosomes movement and localization at the cell periphery. Associated with the cytosolic face of lysosomes, the BORC complex may recruit ARL8B and couple lysosomes to microtubule plus-end-directed kinesin motor. May also be involved in the biogenesis of lysosome-related organelles such as melanosomes. The chain is KxDL motif-containing protein 1 (Kxd1) from Mus musculus (Mouse).